The chain runs to 461 residues: Bifunctional protein GlmU (461 aa).

The interval 1–235 (MTDTRKQRAA…EDDLIGCDSK (235 aa)) is pyrophosphorylase. Residues 13 to 16 (LAAG), Lys27, Gln80, 85 to 86 (GT), 108 to 110 (YGD), Gly146, Glu161, and Asn176 each bind UDP-N-acetyl-alpha-D-glucosamine. Asp110 provides a ligand contact to Mg(2+). A linker region spans residues 236–256 (ADLAEAEAIFQQKRRRALMEA). The tract at residues 257–461 (GVTMVAPETV…ARTTDQNKKG (205 aa)) is N-acetyltransferase. Residues Arg322 and Lys340 each coordinate UDP-N-acetyl-alpha-D-glucosamine. The active-site Proton acceptor is the His352. Positions 355 and 366 each coordinate UDP-N-acetyl-alpha-D-glucosamine. Residues Ala369, 375-376 (NY), Ser394, Ser412, and Arg429 contribute to the acetyl-CoA site.

This sequence in the N-terminal section; belongs to the N-acetylglucosamine-1-phosphate uridyltransferase family. In the C-terminal section; belongs to the transferase hexapeptide repeat family. In terms of assembly, homotrimer. It depends on Mg(2+) as a cofactor.

It localises to the cytoplasm. It catalyses the reaction alpha-D-glucosamine 1-phosphate + acetyl-CoA = N-acetyl-alpha-D-glucosamine 1-phosphate + CoA + H(+). The catalysed reaction is N-acetyl-alpha-D-glucosamine 1-phosphate + UTP + H(+) = UDP-N-acetyl-alpha-D-glucosamine + diphosphate. Its pathway is nucleotide-sugar biosynthesis; UDP-N-acetyl-alpha-D-glucosamine biosynthesis; N-acetyl-alpha-D-glucosamine 1-phosphate from alpha-D-glucosamine 6-phosphate (route II): step 2/2. It functions in the pathway nucleotide-sugar biosynthesis; UDP-N-acetyl-alpha-D-glucosamine biosynthesis; UDP-N-acetyl-alpha-D-glucosamine from N-acetyl-alpha-D-glucosamine 1-phosphate: step 1/1. It participates in bacterial outer membrane biogenesis; LPS lipid A biosynthesis. Its function is as follows. Catalyzes the last two sequential reactions in the de novo biosynthetic pathway for UDP-N-acetylglucosamine (UDP-GlcNAc). The C-terminal domain catalyzes the transfer of acetyl group from acetyl coenzyme A to glucosamine-1-phosphate (GlcN-1-P) to produce N-acetylglucosamine-1-phosphate (GlcNAc-1-P), which is converted into UDP-GlcNAc by the transfer of uridine 5-monophosphate (from uridine 5-triphosphate), a reaction catalyzed by the N-terminal domain. The sequence is that of Bifunctional protein GlmU from Hyphomonas neptunium (strain ATCC 15444).